Reading from the N-terminus, the 443-residue chain is Tubulin epsilon and delta complex protein 2 (443 aa).

Residues 8-33 (RRLVAELRDALDSCAERQRQLEQSLR) are a coiled coil. 2 disordered regions span residues 45–72 (AETP…PSPQ) and 93–146 (GLSK…PWVP). Residues 106-124 (LKSGSASTATKASAPPSTS) show a composition bias toward low complexity.

As to quaternary structure, interacts with TEDC1. Found in a complex with TEDC1, TEDC2, TUBE1 and TUBD1.

The protein localises to the cell projection. It is found in the cilium. The protein resides in the cytoplasm. It localises to the cytoskeleton. Its subcellular location is the microtubule organizing center. The protein localises to the centrosome. It is found in the centriole. Acts as a positive regulator of ciliary hedgehog signaling. Required for centriole stability. This is Tubulin epsilon and delta complex protein 2 from Bos taurus (Bovine).